The chain runs to 1368 residues: MAYSVANNQLLRKHFSTIKGIIEIPNLIDIQKNSYKRFLQAGLPPSARKNIGLEAVFRSVFPIRDFSETCSLDYVSYSLGTPKYDVGECHQRGMTFAAPVKVCVRLVSWDVDKESGVQAIRDIKEQEVYFGEIPLMTENGTFIINGTERVIVSQLHRSPGVFFDHDKGKTHSSGKILYNARVIPYRGSWLDFDFDHKDLLYVRIDRRRKLPATVLLKALGYSAEELLNYYYQVETVTVDGDSFKKKVNLDLLAGQRASTDVLGNDGEIIVKANRKFTKAAIRKLADSNVEYIPVSEEEIVGKVASTDIVDVSTGEVIVECNEEISESKLEELRTRGIVEFNILFIDHLHVGPYLRETLLLDRMATPEDARIEIYRRLRPGDPPTIKSANALFESLFFNPERYDLSVVGRIKLNYKLGLQSPEDQTTLTKDDILEVVRYLIGLRDGRGTIDDIDHLGNRRVRAVGELLENQYRVGLVRMERAIKERMSLQEVDSLMPHDLINSKPVSAVVKEFFGSSQLSQFMDQTNPLSEITHKRRLSALGPGGLTRERAGFEVRDVHPTHYGRVCPIETPEGPNIGLIASLSTYARINEHGFVETPYRIVEQGKVTNEIRYFSALEEGGHAIAQANAPLDDDGRFLNELVNARQNGEFVLIQREEIGLMDVSPKQLVSVAASLIPFLENDDANRALMGSNMQRQAVPLLRADAPLVGTGMERIVAHDSGAAVVARHNGVVESVDASRIVVKIDEGEVDEDGTGVDIYNLIKFARSNQNTCLNQKPIVKVGDRVASGGIIADGPSTEWGELALGQNVLVAFMPWEGYNFEDSILISEKLVKEDRYTSIHIEELECVARDTKLGKEEITNDIPNLGEDALKDLDESGIVRIGAEVKPGDILVGKITPKGETQLSPEEKLLRAIFGEKAGDVRDTSLRLPPGVEGVVIGARVFSRKGSDKDSRTEYIEKTEIEKLLKDQHDEIRIIRESTHGKLESLLVGQTSASALFDAAGKELLGQGEKITSEVLAEVPFARWREISLLDASENEEKLSAIMTSLAQREELIKAVFADKIEKIKRGDDLPPGVIKMVKVYIAIKRKLSVGDKMAGRHGNKGVLSRVLPEEDMPYMADGTPVEIVLNPLGVPSRMNVGQILETHLGLAARGLGVQIQEHLDRYYTPEAMRTKIGECYEDDRVAEFVDALPDDEVMQLARQLSRGVPMASPVFEGVTEEQMKNQMERAGFASSGQMTLYNGKTGEAFKEKVTVGIMYMLKLHHLVDDKIHARSIGPYSLVTQQPLGGKAQFGGQRLGEMEVWAMEAYGAAHALQEFLTVKSDDVTGRTRMYEAIVKGKHTLEAGLPESFNVLIKELQSLCLDVELLEEQE.

The protein belongs to the RNA polymerase beta chain family. As to quaternary structure, the RNAP catalytic core consists of 2 alpha, 1 beta, 1 beta' and 1 omega subunit. When a sigma factor is associated with the core the holoenzyme is formed, which can initiate transcription.

It catalyses the reaction RNA(n) + a ribonucleoside 5'-triphosphate = RNA(n+1) + diphosphate. Functionally, DNA-dependent RNA polymerase catalyzes the transcription of DNA into RNA using the four ribonucleoside triphosphates as substrates. In Syntrophotalea carbinolica (strain DSM 2380 / NBRC 103641 / GraBd1) (Pelobacter carbinolicus), this protein is DNA-directed RNA polymerase subunit beta.